The primary structure comprises 876 residues: DNA mismatch repair protein MutS (876 aa).

626 to 633 (GPNMAGKS) is a binding site for ATP. The segment at 829-856 (FRAAPPPPAPAAPPKASQVEERLRAIQP) is disordered. A compositionally biased stretch (pro residues) spans 832-841 (APPPPAPAAP).

Belongs to the DNA mismatch repair MutS family.

Functionally, this protein is involved in the repair of mismatches in DNA. It is possible that it carries out the mismatch recognition step. This protein has a weak ATPase activity. This is DNA mismatch repair protein MutS from Cereibacter sphaeroides (strain ATCC 17025 / ATH 2.4.3) (Rhodobacter sphaeroides).